A 321-amino-acid chain; its full sequence is Glucokinase (321 aa).

Position 8–13 (Gly8–Thr13) interacts with ATP.

Belongs to the bacterial glucokinase family.

The protein localises to the cytoplasm. The enzyme catalyses D-glucose + ATP = D-glucose 6-phosphate + ADP + H(+). This is Glucokinase from Escherichia fergusonii (strain ATCC 35469 / DSM 13698 / CCUG 18766 / IAM 14443 / JCM 21226 / LMG 7866 / NBRC 102419 / NCTC 12128 / CDC 0568-73).